The following is a 508-amino-acid chain: Photosystem II CP47 reaction center protein (508 aa).

6 helical membrane passes run 21–36 (SVHI…WAGS), 101–115 (IVFS…IWHW), 140–156 (GIHL…FGAF), 203–218 (IAAG…FHLS), 237–252 (VLSS…AFVV), and 457–472 (SFAL…HGSR).

It belongs to the PsbB/PsbC family. PsbB subfamily. PSII is composed of 1 copy each of membrane proteins PsbA, PsbB, PsbC, PsbD, PsbE, PsbF, PsbH, PsbI, PsbJ, PsbK, PsbL, PsbM, PsbT, PsbX, PsbY, PsbZ, Psb30/Ycf12, at least 3 peripheral proteins of the oxygen-evolving complex and a large number of cofactors. It forms dimeric complexes. Binds multiple chlorophylls. PSII binds additional chlorophylls, carotenoids and specific lipids. is required as a cofactor.

It localises to the plastid. The protein localises to the chloroplast thylakoid membrane. One of the components of the core complex of photosystem II (PSII). It binds chlorophyll and helps catalyze the primary light-induced photochemical processes of PSII. PSII is a light-driven water:plastoquinone oxidoreductase, using light energy to abstract electrons from H(2)O, generating O(2) and a proton gradient subsequently used for ATP formation. The protein is Photosystem II CP47 reaction center protein of Lepidium virginicum (Virginia pepperweed).